Reading from the N-terminus, the 98-residue chain is Small ribosomal subunit protein uS19 (98 aa).

Residues 77 to 98 (TRTYRGHAGGKSEKGGSAPRKK) form a disordered region.

It belongs to the universal ribosomal protein uS19 family.

Its function is as follows. Protein S19 forms a complex with S13 that binds strongly to the 16S ribosomal RNA. The chain is Small ribosomal subunit protein uS19 from Chlorobium phaeobacteroides (strain BS1).